We begin with the raw amino-acid sequence, 715 residues long: Polyribonucleotide nucleotidyltransferase (715 aa).

Residues Asp-493 and Asp-499 each contribute to the Mg(2+) site. In terms of domain architecture, KH spans 560-619 (PRMITIKINPEKIRDVIGKGGSVIRALTEETGTTIDISDDGVVTIASTSSEGMAEAKKRI). The 69-residue stretch at 629–697 (GQVYEGTVLK…EKGRVRLSAK (69 aa)) folds into the S1 motif domain.

The protein belongs to the polyribonucleotide nucleotidyltransferase family. It depends on Mg(2+) as a cofactor.

The protein localises to the cytoplasm. It carries out the reaction RNA(n+1) + phosphate = RNA(n) + a ribonucleoside 5'-diphosphate. Its function is as follows. Involved in mRNA degradation. Catalyzes the phosphorolysis of single-stranded polyribonucleotides processively in the 3'- to 5'-direction. The polypeptide is Polyribonucleotide nucleotidyltransferase (Burkholderia multivorans (strain ATCC 17616 / 249)).